Here is a 245-residue protein sequence, read N- to C-terminus: tRNA pseudouridine synthase A (245 aa).

The Nucleophile role is filled by Asp-52. Tyr-111 is a substrate binding site.

It belongs to the tRNA pseudouridine synthase TruA family. As to quaternary structure, homodimer.

The enzyme catalyses uridine(38/39/40) in tRNA = pseudouridine(38/39/40) in tRNA. Functionally, formation of pseudouridine at positions 38, 39 and 40 in the anticodon stem and loop of transfer RNAs. This Rhodopseudomonas palustris (strain BisB18) protein is tRNA pseudouridine synthase A.